The following is a 391-amino-acid chain: Suppressor APC domain-containing protein 2 (391 aa).

The tract at residues 1-20 (MAVAAMAERGRLSHAAPAPS) is disordered. Phosphothreonine is present on T218. Residues 226 to 277 (SLLKQMKELDQEQEVLLQGLEMMARGRDWYQQQLQRVQERQRRLSQSRAAAD) are a coiled coil. A Phosphoserine modification is found at S283. Positions 340-381 (LKEQNRLLTQEVTDKSERITQLEQEKSALIKQLFEARALSQQ) form a coiled coil.

As to quaternary structure, interacts with a spindle orientation complex at least composed of GNAI1, GPSM2 and NUMA1. Interacts with GPSM2 (via TPR motifs); this interaction is required to prevent GPSM2 anchoring at the mitotic apical cortex and is inhibited in presence of NUMA1 in a dose dependent manner. Interacts with PARD3. In terms of tissue distribution, expressed in the retina. Expressed in retinal progenitor cells and newly differentiated neurons but not in mature retinal cells (at protein level).

It is found in the cytoplasm. The protein localises to the nucleus. It localises to the cell cortex. The protein resides in the apical cell membrane. Its subcellular location is the cell junction. It is found in the tight junction. Its function is as follows. Plays a role in planar mitotic spindle orientation in retinal progenitor cells (RPCs) and promotes the production of symmetric terminal divisions. Negatively regulates the mitotic apical cortex localization of GPSM2. Involved also in positive regulation of cell proliferation and tumor cell growth. In Mus musculus (Mouse), this protein is Suppressor APC domain-containing protein 2.